Here is a 239-residue protein sequence, read N- to C-terminus: Probable septum site-determining protein MinC (239 aa).

The protein belongs to the MinC family. In terms of assembly, interacts with MinD and FtsZ.

Its function is as follows. Cell division inhibitor that blocks the formation of polar Z ring septums. Rapidly oscillates between the poles of the cell to destabilize FtsZ filaments that have formed before they mature into polar Z rings. Prevents FtsZ polymerization. This is Probable septum site-determining protein MinC from Colwellia psychrerythraea (strain 34H / ATCC BAA-681) (Vibrio psychroerythus).